The chain runs to 460 residues: Trigger factor (460 aa).

In terms of domain architecture, PPIase FKBP-type spans 166–245; that stretch reads DDFLTIDITA…VKAVKERELP (80 aa). A disordered region spans residues 434–460; it reads AAEEAAAGEANEEADVVASDDPAAVKF. Positions 449-460 are enriched in low complexity; it reads VVASDDPAAVKF.

This sequence belongs to the FKBP-type PPIase family. Tig subfamily.

It localises to the cytoplasm. It carries out the reaction [protein]-peptidylproline (omega=180) = [protein]-peptidylproline (omega=0). In terms of biological role, involved in protein export. Acts as a chaperone by maintaining the newly synthesized protein in an open conformation. Functions as a peptidyl-prolyl cis-trans isomerase. The sequence is that of Trigger factor from Paenarthrobacter aurescens (strain TC1).